Consider the following 150-residue polypeptide: Large ribosomal subunit protein bL9 (150 aa).

Belongs to the bacterial ribosomal protein bL9 family.

Its function is as follows. Binds to the 23S rRNA. The polypeptide is Large ribosomal subunit protein bL9 (Erwinia tasmaniensis (strain DSM 17950 / CFBP 7177 / CIP 109463 / NCPPB 4357 / Et1/99)).